Reading from the N-terminus, the 115-residue chain is Large ribosomal subunit protein bL20 (115 aa).

This sequence belongs to the bacterial ribosomal protein bL20 family.

In terms of biological role, binds directly to 23S ribosomal RNA and is necessary for the in vitro assembly process of the 50S ribosomal subunit. It is not involved in the protein synthesizing functions of that subunit. This chain is Large ribosomal subunit protein bL20, found in Borrelia hermsii (strain HS1 / DAH).